The sequence spans 583 residues: Isocitrate dehydrogenase kinase/phosphatase (583 aa).

Residues alanine 315–methionine 321 and lysine 336 each bind ATP. Residue aspartate 371 is part of the active site.

It belongs to the AceK family.

The protein localises to the cytoplasm. It carries out the reaction L-seryl-[isocitrate dehydrogenase] + ATP = O-phospho-L-seryl-[isocitrate dehydrogenase] + ADP + H(+). Functionally, bifunctional enzyme which can phosphorylate or dephosphorylate isocitrate dehydrogenase (IDH) on a specific serine residue. This is a regulatory mechanism which enables bacteria to bypass the Krebs cycle via the glyoxylate shunt in response to the source of carbon. When bacteria are grown on glucose, IDH is fully active and unphosphorylated, but when grown on acetate or ethanol, the activity of IDH declines drastically concomitant with its phosphorylation. This Salmonella heidelberg (strain SL476) protein is Isocitrate dehydrogenase kinase/phosphatase.